Here is a 294-residue protein sequence, read N- to C-terminus: MAESLQLVIISGMSGAGKTVAVQSFEDLGYFCIDNMPPALLPKFSELVEESGKIKKVALVIDLRSRAFYDEIMDMLANLDNTDFVSTRILFLDASNEELVSRYKETRRSHPLAMEGRVMDGVRKERELLAPLKDRASYVIDTSTLTPRELRESIFDKFETDQDETFHIEMLSFGFKYGLPIDADIVMDVRFLPNPYYIPELKKLTGLDKPVADYVMQQPATEAFYQQFLSMLESIMPGYEAEGKSSLTIAIGCTGGQHRSVALTQRIGEALAKHYKVHISHRDIEKRKETVNRS.

12–19 (GMSGAGKT) is a binding site for ATP. 62–65 (DLRS) contacts GTP.

This sequence belongs to the RapZ-like family.

In terms of biological role, displays ATPase and GTPase activities. This Lactiplantibacillus plantarum (strain ATCC BAA-793 / NCIMB 8826 / WCFS1) (Lactobacillus plantarum) protein is Nucleotide-binding protein lp_0779.